The following is a 234-amino-acid chain: Small ribosomal subunit protein eS4 (234 aa).

One can recognise an S4 RNA-binding domain in the interval 39–102 (MPLVVVLRDL…NANYRVVIGM (64 aa)).

The protein belongs to the eukaryotic ribosomal protein eS4 family.

The protein is Small ribosomal subunit protein eS4 of Methanocella arvoryzae (strain DSM 22066 / NBRC 105507 / MRE50).